We begin with the raw amino-acid sequence, 196 residues long: Endoribonuclease YbeY (196 aa).

H120, H124, and H130 together coordinate Zn(2+).

It belongs to the endoribonuclease YbeY family. Zn(2+) is required as a cofactor.

It localises to the cytoplasm. Its function is as follows. Single strand-specific metallo-endoribonuclease involved in late-stage 70S ribosome quality control and in maturation of the 3' terminus of the 16S rRNA. In Corynebacterium glutamicum (strain ATCC 13032 / DSM 20300 / JCM 1318 / BCRC 11384 / CCUG 27702 / LMG 3730 / NBRC 12168 / NCIMB 10025 / NRRL B-2784 / 534), this protein is Endoribonuclease YbeY.